Here is a 1248-residue protein sequence, read N- to C-terminus: Reverse gyrase 1 (1248 aa).

The segment at 7-44 (IPPSIYLFSCPNCGRSISTYRLLLGSVCNICLEEDKEY) adopts an RG N-terminal-type zinc-finger fold. Positions 16, 19, 34, and 37 each coordinate Zn(2+). Residues Gln92 and 109–116 (APPGLGKT) contribute to the ATP site. One can recognise a Helicase ATP-binding domain in the interval 96–262 (IYRLLSGESF…KKYRENTQKN (167 aa)). The DEAD box motif lies at 219–222 (DDVD). The segment at 621 to 1248 (QKVKTVLLVV…QVYEEINEIR (628 aa)) is topoisomerase I. The Toprim domain maps to 625–789 (TVLLVVESPN…NIRRAEFHEV (165 aa)). Mg(2+) is bound at residue Glu631. The segment at 706–735 (IKKCENNHQFTDFFESNKCPRCMTTKVRYD) adopts an RG C-terminal-type; atypical zinc-finger fold. Residues Cys709, His713, Cys724, and Cys727 each coordinate Zn(2+). Asp758 is a Mg(2+) binding site. Residues 805–1248 (NVNLVKSQLV…QVYEEINEIR (444 aa)) form the Topo IA-type catalytic domain. Tyr965 serves as the catalytic O-(5'-phospho-DNA)-tyrosine intermediate.

The protein in the N-terminal section; belongs to the DEAD box helicase family. DDVD subfamily. In the C-terminal section; belongs to the type IA topoisomerase family. Monomer. Requires Zn(2+) as cofactor. It depends on Mg(2+) as a cofactor. Post-translationally, the N-terminus is blocked.

The protein resides in the cytoplasm. The enzyme catalyses ATP + H2O = ADP + phosphate + H(+). Its function is as follows. Modifies the topological state of DNA by introducing positive supercoils in an ATP-dependent process. Increases the linking number in steps of +1. Has a DNA-stimulated ATPase activity; closed circular ssDNA stimulates ATPase much better than dsDNA although negative supercoiled, positive supercoiled and relaxed dsDNA all stimulate ATPase activity. All NTPs permit topoisomerization (relaxation) of negatively supercoiled dsDNA without nucleotide hydrolysis. It transiently cleaves a single DNA strand and remains covalently bound to the 5' DNA end. Acts via a tyrosine residue. Reverse gyrase binds and unwinds DNA independently of ATP binding and DNA cleavage. May be involved in rewinding the DNA strands in the regions of the chromosome that have opened up to allow transcription or replication, probably acts via ssDNA regions of the chromosome. This is Reverse gyrase 1 from Sulfolobus acidocaldarius (strain ATCC 33909 / DSM 639 / JCM 8929 / NBRC 15157 / NCIMB 11770).